We begin with the raw amino-acid sequence, 449 residues long: Hyaluronidase (449 aa).

The N-terminal stretch at 1-23 is a signal peptide; it reads MYHLWIKCLAAWIFLKRFNGVHV. 2 disulfide bridges follow: cysteine 47–cysteine 340 and cysteine 211–cysteine 227. N-linked (GlcNAc...) asparagine glycosylation is found at asparagine 67 and asparagine 103. Catalysis depends on glutamate 135, which acts as the Proton donor. Asparagine 153 is a glycosylation site (N-linked (GlcNAc...) asparagine). N-linked (GlcNAc...) asparagine glycosylation is present at asparagine 357. Cystine bridges form between cysteine 365-cysteine 376, cysteine 370-cysteine 427, and cysteine 429-cysteine 438. Asparagine 401 carries an N-linked (GlcNAc...) asparagine glycan. The EGF-like domain occupies 427-438; the sequence is CQCYQGWQGLYC.

It belongs to the glycosyl hydrolase 56 family. Monomer. Expressed by the venom gland.

The protein localises to the secreted. The enzyme catalyses Random hydrolysis of (1-&gt;4)-linkages between N-acetyl-beta-D-glucosamine and D-glucuronate residues in hyaluronate.. In terms of biological role, snake venom endo-hyaluronidase that degrades hyaluronan to smaller oligosaccharide fragments. In venom, it is not toxic by itself, but increases the diffusion of other venom proteins by degrading the extracellular matrix. In addition, it displays antiedematogenic activity. This is Hyaluronidase from Echis ocellatus (Ocellated saw-scaled viper).